We begin with the raw amino-acid sequence, 340 residues long: Extracellular matrix protein-binding protein emp (340 aa).

The N-terminal stretch at 1–26 (MKKKLLVLTMSTLFATQLINSNHANA) is a signal peptide.

The protein resides in the cell surface. In terms of biological role, adhesin that binds to the host cell extracellular matrix proteins fibronectin, fibrinogen, collagen, and vitronectin. In Staphylococcus aureus, this protein is Extracellular matrix protein-binding protein emp (emp).